The chain runs to 391 residues: Polyisoprenyl-teichoic acid--peptidoglycan teichoic acid transferase TagV (391 aa).

Topologically, residues 1–23 (MAERVRVRVRKKKKSKRRKILKR) are cytoplasmic. A helical; Signal-anchor for type II membrane protein transmembrane segment spans residues 24–44 (IMLLFALALLVVVGLGGYKLY). Residues 45 to 391 (KTINAADESY…TTNSTTDSSY (347 aa)) are Extracellular-facing. A disordered region spans residues 329 to 391 (DYTPDTSTGT…TTNSTTDSSY (63 aa)). Low complexity predominate over residues 333–391 (DTSTGTSGTEDGTDSSSSSGSTGSTGTTTDGTTNGSSYSNDSSTSSNNSTTNSTTDSSY).

It belongs to the LytR/CpsA/Psr (LCP) family.

The protein resides in the cell membrane. Its pathway is cell wall biogenesis. Functionally, may catalyze the final step in cell wall teichoic acid biosynthesis, the transfer of the anionic cell wall polymers (APs) from their lipid-linked precursor to the cell wall peptidoglycan (PG). The protein is Polyisoprenyl-teichoic acid--peptidoglycan teichoic acid transferase TagV of Bacillus subtilis (strain 168).